A 117-amino-acid chain; its full sequence is DNA-directed RNA polymerase subunit omega (117 aa).

Residues 96–105 (KEEAEEEAKQ) show a composition bias toward basic and acidic residues. The disordered stretch occupies residues 96-117 (KEEAEEEAKQKNSRAAKAAAAE). A compositionally biased stretch (low complexity) spans 108 to 117 (SRAAKAAAAE).

The protein belongs to the RNA polymerase subunit omega family. The RNAP catalytic core consists of 2 alpha, 1 beta, 1 beta' and 1 omega subunit. When a sigma factor is associated with the core the holoenzyme is formed, which can initiate transcription.

It carries out the reaction RNA(n) + a ribonucleoside 5'-triphosphate = RNA(n+1) + diphosphate. Functionally, promotes RNA polymerase assembly. Latches the N- and C-terminal regions of the beta' subunit thereby facilitating its interaction with the beta and alpha subunits. The protein is DNA-directed RNA polymerase subunit omega of Lactococcus lactis subsp. cremoris (strain MG1363).